We begin with the raw amino-acid sequence, 83 residues long: uncharacterized protein (83 aa).

3 helical membrane-spanning segments follow: residues 7-26 (FARF…IVSY), 36-58 (LSPL…ILPF), and 65-82 (ILTV…YLAF).

The protein localises to the cell membrane. This is an uncharacterized protein from Archaeoglobus fulgidus (strain ATCC 49558 / DSM 4304 / JCM 9628 / NBRC 100126 / VC-16).